We begin with the raw amino-acid sequence, 137 residues long: MRNYENLVIVKPTLTAEEIQANISAIEEIITSNGGEIAARDAMGMRKLAYPLGKNERGYFHVIYYSVDPSAISEIERRFRINEELLRFVTIKYDTNREVTAWNQLVQKAQKKATQPAGEAKVEEVVIPAALEEDEEE.

This sequence belongs to the bacterial ribosomal protein bS6 family.

In terms of biological role, binds together with bS18 to 16S ribosomal RNA. The sequence is that of Small ribosomal subunit protein bS6 from Sulfurimonas denitrificans (strain ATCC 33889 / DSM 1251) (Thiomicrospira denitrificans (strain ATCC 33889 / DSM 1251)).